Here is a 511-residue protein sequence, read N- to C-terminus: Ribose import ATP-binding protein RbsA (511 aa).

ABC transporter domains are found at residues 7 to 242 and 256 to 500; these read LQIS…VGRE and CSTT…SGTQ. 39–46 contributes to the ATP binding site; sequence GENGAGKS.

The protein belongs to the ABC transporter superfamily. Ribose importer (TC 3.A.1.2.1) family. As to quaternary structure, the complex is composed of an ATP-binding protein (RbsA), two transmembrane proteins (RbsC) and a solute-binding protein (RbsB).

It localises to the cell inner membrane. It carries out the reaction D-ribose(out) + ATP + H2O = D-ribose(in) + ADP + phosphate + H(+). Part of the ABC transporter complex RbsABC involved in ribose import. Responsible for energy coupling to the transport system. This chain is Ribose import ATP-binding protein RbsA, found in Ruegeria sp. (strain TM1040) (Silicibacter sp.).